The sequence spans 577 residues: Phosphoethanolamine transferase EptC (577 aa).

5 helical membrane passes run 17-37 (LGWA…IIYI), 44-64 (NGIR…FLFP), 69-89 (IIAA…LCYY), 119-139 (YFSL…VLLW), and 154-174 (VVSF…NTFI).

Belongs to the phosphoethanolamine transferase family. EptC/CptA subfamily.

The protein localises to the cell inner membrane. Its pathway is bacterial outer membrane biogenesis; LPS core biosynthesis. Its function is as follows. Catalyzes the addition of a phosphoethanolamine moiety to the outer membrane lipopolysaccharide core. Plays a role in the pathogenesis of E.coli meningitis. Required for invasion of E.coli K1 into brain microvascular endothelial cells (BMEC). Contributes to E.coli traversal across the blood-brain barrier. The sequence is that of Phosphoethanolamine transferase EptC (eptC) from Escherichia coli O18:K1:H7 (strain RS218 / NMEC).